The following is an 878-amino-acid chain: Aconitate hydratase A (878 aa).

Residues Cys426, Cys492, and Cys495 each coordinate [4Fe-4S] cluster.

The protein belongs to the aconitase/IPM isomerase family. Monomer. The cofactor is [4Fe-4S] cluster.

The enzyme catalyses citrate = D-threo-isocitrate. The catalysed reaction is (2S,3R)-3-hydroxybutane-1,2,3-tricarboxylate = 2-methyl-cis-aconitate + H2O. It functions in the pathway carbohydrate metabolism; tricarboxylic acid cycle; isocitrate from oxaloacetate: step 2/2. Its pathway is organic acid metabolism; propanoate degradation. Its function is as follows. Involved in the catabolism of short chain fatty acids (SCFA) via the tricarboxylic acid (TCA)(acetyl degradation route) and probably the 2-methylcitrate cycle I (propionate degradation route). Catalyzes the reversible isomerization of citrate to isocitrate via cis-aconitate. Could catalyze the hydration of 2-methyl-cis-aconitate to yield (2R,3S)-2-methylisocitrate. The apo form of AcnA functions as a RNA-binding regulatory protein. This is Aconitate hydratase A (acnA) from Rickettsia conorii (strain ATCC VR-613 / Malish 7).